A 297-amino-acid chain; its full sequence is Probable oxidoreductase (297 aa).

9–33 serves as a coordination point for NAD(+); sequence VVTGGASGLGAETVRALAAAGAEVT. Serine 138 lines the substrate pocket. Tyrosine 164 acts as the Proton acceptor in catalysis.

Belongs to the short-chain dehydrogenases/reductases (SDR) family.

The protein is Probable oxidoreductase of Streptomyces lividans.